The sequence spans 649 residues: L-ornithine N(5)-monooxygenase (649 aa).

Residues 72–80 (EKRGHFAWH) and Q91 contribute to the FAD site. K96 contributes to the substrate binding site. V157 lines the FAD pocket. NADP(+) contacts are provided by residues 289 to 292 (AGQS) and R314. Residues 328–331 (NSAA) and N359 each bind substrate. 359–361 (NYS) provides a ligand contact to NADP(+). A disordered region spans residues 512 to 547 (AMQSDAVRSGKSSPGSGSDASSTSSQQTLASENSTE). Low complexity predominate over residues 520–536 (SGKSSPGSGSDASSTSS). Over residues 537 to 547 (QQTLASENSTE) the composition is skewed to polar residues. 569–571 (SLL) serves as a coordination point for FAD. Position 572 (S572) interacts with substrate. Residues 585–611 (LLQRLPRTRRGTASSAATQPAASTVAS) are disordered. Over residues 596-611 (TASSAATQPAASTVAS) the composition is skewed to low complexity.

Belongs to the lysine N(6)-hydroxylase/L-ornithine N(5)-oxygenase family. In terms of assembly, homotetramer. FAD is required as a cofactor.

The catalysed reaction is L-ornithine + NADPH + O2 = N(5)-hydroxy-L-ornithine + NADP(+) + H2O. It carries out the reaction L-ornithine + NADH + O2 = N(5)-hydroxy-L-ornithine + NAD(+) + H2O. It functions in the pathway siderophore biosynthesis; ferrichrome biosynthesis. In terms of biological role, catalyzes the conversion of L-ornithine to N(5)-hydroxyornithine, the first step in the biosynthesis of all hydroxamate-containing siderophores, such as ferrichrome. In Mycosarcoma maydis (Corn smut fungus), this protein is L-ornithine N(5)-monooxygenase (SID1).